The primary structure comprises 501 residues: Ribose import ATP-binding protein RbsA 1 (501 aa).

2 consecutive ABC transporter domains span residues 5 to 241 and 252 to 495; these read LQLK…VGRK and APGD…VGKL. ATP is bound at residue 37 to 44; sequence GENGAGKS.

The protein belongs to the ABC transporter superfamily. Ribose importer (TC 3.A.1.2.1) family. The complex is composed of an ATP-binding protein (RbsA), two transmembrane proteins (RbsC) and a solute-binding protein (RbsB).

It localises to the cell inner membrane. It catalyses the reaction D-ribose(out) + ATP + H2O = D-ribose(in) + ADP + phosphate + H(+). Part of the ABC transporter complex RbsABC involved in ribose import. Responsible for energy coupling to the transport system. This Escherichia coli O157:H7 protein is Ribose import ATP-binding protein RbsA 1.